A 217-amino-acid polypeptide reads, in one-letter code: Oxygen regulatory protein NreC (217 aa).

Residues 2 to 119 (KIVIADDHAV…QLLLAIRTVY (118 aa)) form the Response regulatory domain. The residue at position 53 (D53) is a 4-aspartylphosphate. Positions 148–213 (TSDPFKILSK…ELVEYALKKK (66 aa)) constitute an HTH luxR-type domain. The H-T-H motif DNA-binding region spans 172 to 191 (NKEIAEKLFVSVKTVEAHKT).

Post-translationally, phosphorylated by NreB.

Its subcellular location is the cytoplasm. Member of the two-component regulatory system NreB/NreC involved in the control of dissimilatory nitrate/nitrite reduction in response to oxygen. Phosphorylated NreC binds to a GC-rich palindromic sequence at the promoters of the nitrate (narGHJI) and nitrite (nir) reductase operons, as well as the putative nitrate transporter gene narT, and activates their expression. In Staphylococcus aureus (strain bovine RF122 / ET3-1), this protein is Oxygen regulatory protein NreC (nreC).